We begin with the raw amino-acid sequence, 111 residues long: Large ribosomal subunit protein uL22 (111 aa).

The protein belongs to the universal ribosomal protein uL22 family. Part of the 50S ribosomal subunit.

This protein binds specifically to 23S rRNA; its binding is stimulated by other ribosomal proteins, e.g. L4, L17, and L20. It is important during the early stages of 50S assembly. It makes multiple contacts with different domains of the 23S rRNA in the assembled 50S subunit and ribosome. In terms of biological role, the globular domain of the protein is located near the polypeptide exit tunnel on the outside of the subunit, while an extended beta-hairpin is found that lines the wall of the exit tunnel in the center of the 70S ribosome. This chain is Large ribosomal subunit protein uL22, found in Legionella pneumophila (strain Lens).